The chain runs to 315 residues: Zinc finger protein 691 (315 aa).

Polar residues predominate over residues 1 to 10 (MSLCSPTHSA). Positions 1–90 (MSLCSPTHSA…QETHPKKPWQ (90 aa)) are disordered. Over residues 33-58 (GSEKEQSPEPHLPEEGEGGKPWRVDD) the composition is skewed to basic and acidic residues. A phosphoserine mark is found at Ser39, Ser75, and Ser77. Residue Lys113 forms a Glycyl lysine isopeptide (Lys-Gly) (interchain with G-Cter in SUMO2) linkage. C2H2-type zinc fingers lie at residues 115-137 (FICA…QRIH), 143-165 (YKCS…ERIH), 171-193 (YKCP…QQDH), 199-221 (YRCD…HRTH), 227-249 (YICC…HRTH), 255-277 (YECT…QRTH), and 283-305 (YRCT…QKTH).

Belongs to the krueppel C2H2-type zinc-finger protein family.

Its subcellular location is the nucleus. Functionally, may be involved in transcriptional regulation. This Homo sapiens (Human) protein is Zinc finger protein 691 (ZNF691).